The primary structure comprises 320 residues: Tyrosine recombinase XerC (320 aa).

The 91-residue stretch at Ala14 to Glu104 folds into the Core-binding (CB) domain. The 187-residue stretch at Arg125 to Glu311 folds into the Tyr recombinase domain. Residues Arg170, Lys195, His263, Arg266, and His289 contribute to the active site. The active-site O-(3'-phospho-DNA)-tyrosine intermediate is Tyr298.

This sequence belongs to the 'phage' integrase family. XerC subfamily. Forms a cyclic heterotetrameric complex composed of two molecules of XerC and two molecules of XerD.

It localises to the cytoplasm. Functionally, site-specific tyrosine recombinase, which acts by catalyzing the cutting and rejoining of the recombining DNA molecules. The XerC-XerD complex is essential to convert dimers of the bacterial chromosome into monomers to permit their segregation at cell division. It also contributes to the segregational stability of plasmids. The sequence is that of Tyrosine recombinase XerC from Methylobacterium sp. (strain 4-46).